The sequence spans 529 residues: Ectonucleoside triphosphate diphosphohydrolase 3 (529 aa).

Residues 1 to 22 (MFTVLTRQPCEQAGLKALYRTP) lie on the Cytoplasmic side of the membrane. A helical membrane pass occupies residues 23 to 43 (TIIALVVLLVSIVVLVSITVI). The Extracellular segment spans residues 44–485 (QIHKQEVLPP…PLIRLPIEPP (442 aa)). Residue Asn-81 is glycosylated (N-linked (GlcNAc...) asparagine). A disulfide bridge links Cys-92 with Cys-116. A glycan (N-linked (GlcNAc...) asparagine) is linked at Asn-149. Glu-182 acts as the Proton acceptor in catalysis. 222-226 (GASTQ) is a binding site for ATP. Asn-238 carries an N-linked (GlcNAc...) asparagine glycan. 3 disulfide bridges follow: Cys-261–Cys-308, Cys-289–Cys-334, and Cys-347–Cys-353. 4 N-linked (GlcNAc...) asparagine glycosylation sites follow: Asn-381, Asn-392, Asn-402, and Asn-454. A disulfide bridge connects residues Cys-399 and Cys-422. The helical transmembrane segment at 486–506 (VFVGTLAFFTAAALLCLAFLA) threads the bilayer. Over 507-529 (YLCSATRRKRHSEHAFDHAVDSD) the chain is Cytoplasmic.

This sequence belongs to the GDA1/CD39 NTPase family. Requires Ca(2+) as cofactor. Mg(2+) is required as a cofactor. As to expression, expressed in adult brain, pancreas, spleen and prostate. Moderate or low expression is seen in most tissues. Not expressed in liver and peripheral blood leukocytes.

It is found in the cell membrane. It catalyses the reaction a ribonucleoside 5'-triphosphate + 2 H2O = a ribonucleoside 5'-phosphate + 2 phosphate + 2 H(+). Has a threefold preference for the hydrolysis of ATP over ADP. The chain is Ectonucleoside triphosphate diphosphohydrolase 3 (ENTPD3) from Homo sapiens (Human).